A 176-amino-acid polypeptide reads, in one-letter code: Japanin-like-RS (176 aa).

An N-terminal signal peptide occupies residues Met1–Gly24. Intrachain disulfides connect Cys52-Cys174 and Cys138-Cys162. Asn155 is a glycosylation site (N-linked (GlcNAc...) asparagine).

The protein belongs to the calycin superfamily. Lipocalin family. As to quaternary structure, homodimer; non-disulfide-linked. Each monomer accommodates one molecule of cholesterol in a pocket. As to expression, expressed in salivary glands.

Its subcellular location is the secreted. Salivary tick protein that modulates host immune response. This protein blocks dendritic cell (DC) differentiation from monocytes. In addition, it inhibits up-regulation of costimulatory molecules and pro-inflammatory cytokines in response to stimuli and promotes up-regulation of co-inhibitory molecules and the anti-inflammatory cytokine interleukin-10. It has a pocket to accomodate cholesterol, which may have immune-modulatory roles, either directly or through interactions with the host gut microbiota. This chain is Japanin-like-RS, found in Rhipicephalus sanguineus (Brown dog tick).